A 359-amino-acid chain; its full sequence is S-adenosylmethionine:tRNA ribosyltransferase-isomerase (359 aa).

This sequence belongs to the QueA family. In terms of assembly, monomer.

It is found in the cytoplasm. It carries out the reaction 7-aminomethyl-7-carbaguanosine(34) in tRNA + S-adenosyl-L-methionine = epoxyqueuosine(34) in tRNA + adenine + L-methionine + 2 H(+). It functions in the pathway tRNA modification; tRNA-queuosine biosynthesis. Transfers and isomerizes the ribose moiety from AdoMet to the 7-aminomethyl group of 7-deazaguanine (preQ1-tRNA) to give epoxyqueuosine (oQ-tRNA). The protein is S-adenosylmethionine:tRNA ribosyltransferase-isomerase of Colwellia psychrerythraea (strain 34H / ATCC BAA-681) (Vibrio psychroerythus).